The sequence spans 476 residues: Cytochrome c oxidase subunit 1 (476 aa).

The helical transmembrane segment at 19–39 (LYYLWFSFLFGSYGFLLSVIL) threads the bilayer. E42 is a binding site for Ca(2+). 8 helical membrane passes run 61–81 (MIFT…GLFG), 105–125 (ISLL…AAEF), 151–171 (VIIF…LNFI), 194–214 (LIIT…GVLM), 240–260 (LFWF…FGVI), 278–298 (MILA…HHMY), 310–330 (FTST…NWIC), and 345–365 (LLSL…VILG). Residue H66 coordinates Fe(II)-heme a. Cu cation is bound at residue H246. A cross-link (1'-histidyl-3'-tyrosine (His-Tyr)) is located at residues 246–250 (HPEVY). Y250 contributes to the O2 binding site. Positions 295 and 296 each coordinate Cu cation. Residues H374 and D375 each contribute to the Mg(2+) site. Transmembrane regions (helical) follow at residues 379 to 399 (VIAH…FTTV) and 415 to 435 (SIVI…FLPM). Residue H382 participates in heme a3 binding. H384 serves as a coordination point for Fe(II)-heme a. P448 contributes to the Ca(2+) binding site. Residues 455–475 (NGWNMICSIGSTMTLFGLLIF) form a helical membrane-spanning segment.

It belongs to the heme-copper respiratory oxidase family. Component of the cytochrome c oxidase (complex IV, CIV), a multisubunit enzyme composed of a catalytic core of 3 subunits and several supernumerary subunits. The complex exists as a monomer or a dimer and forms supercomplexes (SCs) in the inner mitochondrial membrane with ubiquinol-cytochrome c oxidoreductase (cytochrome b-c1 complex, complex III, CIII). Heme is required as a cofactor. The cofactor is Cu cation.

The protein resides in the mitochondrion inner membrane. It catalyses the reaction 4 Fe(II)-[cytochrome c] + O2 + 8 H(+)(in) = 4 Fe(III)-[cytochrome c] + 2 H2O + 4 H(+)(out). Its pathway is energy metabolism; oxidative phosphorylation. Its function is as follows. Component of the cytochrome c oxidase, the last enzyme in the mitochondrial electron transport chain which drives oxidative phosphorylation. The respiratory chain contains 3 multisubunit complexes succinate dehydrogenase (complex II, CII), ubiquinol-cytochrome c oxidoreductase (cytochrome b-c1 complex, complex III, CIII) and cytochrome c oxidase (complex IV, CIV), that cooperate to transfer electrons derived from NADH and succinate to molecular oxygen, creating an electrochemical gradient over the inner membrane that drives transmembrane transport and the ATP synthase. Cytochrome c oxidase is the component of the respiratory chain that catalyzes the reduction of oxygen to water. Electrons originating from reduced cytochrome c in the intermembrane space (IMS) are transferred via the dinuclear copper A center (CU(A)) of subunit 2 and heme A of subunit 1 to the active site in subunit 1, a binuclear center (BNC) formed by heme A3 and copper B (CU(B)). The BNC reduces molecular oxygen to 2 water molecules using 4 electrons from cytochrome c in the IMS and 4 protons from the mitochondrial matrix. The sequence is that of Cytochrome c oxidase subunit 1 (MT-CO1) from Plasmodium falciparum.